Here is a 397-residue protein sequence, read N- to C-terminus: Riboflavin biosynthesis protein RibBA (397 aa).

A DHBP synthase region spans residues methionine 1–histidine 199. D-ribulose 5-phosphate contacts are provided by residues arginine 26–glutamate 27, aspartate 31, arginine 138–threonine 142, and glutamate 162. Residue glutamate 27 participates in Mg(2+) binding. Residue histidine 141 participates in Mg(2+) binding. Residues histidine 200 to leucine 397 are GTP cyclohydrolase II. Arginine 250 to glutamate 254 contributes to the GTP binding site. The Zn(2+) site is built by cysteine 255, cysteine 266, and cysteine 268. GTP contacts are provided by residues glutamine 271, glutamate 293–arginine 295, and threonine 315. Residue aspartate 327 is the Proton acceptor; for GTP cyclohydrolase activity of the active site. Catalysis depends on arginine 329, which acts as the Nucleophile; for GTP cyclohydrolase activity. The GTP site is built by threonine 350 and lysine 355.

In the N-terminal section; belongs to the DHBP synthase family. The protein in the C-terminal section; belongs to the GTP cyclohydrolase II family. It depends on Mg(2+) as a cofactor. Requires Mn(2+) as cofactor. Zn(2+) is required as a cofactor.

The enzyme catalyses D-ribulose 5-phosphate = (2S)-2-hydroxy-3-oxobutyl phosphate + formate + H(+). It carries out the reaction GTP + 4 H2O = 2,5-diamino-6-hydroxy-4-(5-phosphoribosylamino)-pyrimidine + formate + 2 phosphate + 3 H(+). It functions in the pathway cofactor biosynthesis; riboflavin biosynthesis; 2-hydroxy-3-oxobutyl phosphate from D-ribulose 5-phosphate: step 1/1. The protein operates within cofactor biosynthesis; riboflavin biosynthesis; 5-amino-6-(D-ribitylamino)uracil from GTP: step 1/4. In terms of biological role, catalyzes the conversion of D-ribulose 5-phosphate to formate and 3,4-dihydroxy-2-butanone 4-phosphate. Catalyzes the conversion of GTP to 2,5-diamino-6-ribosylamino-4(3H)-pyrimidinone 5'-phosphate (DARP), formate and pyrophosphate. In Bacillus cereus (strain ATCC 14579 / DSM 31 / CCUG 7414 / JCM 2152 / NBRC 15305 / NCIMB 9373 / NCTC 2599 / NRRL B-3711), this protein is Riboflavin biosynthesis protein RibBA.